Reading from the N-terminus, the 165-residue chain is Neuropeptide W (165 aa).

An N-terminal signal peptide occupies residues 1–32 (MAWRPGERGAPASRPRLALLLLLLLLPLPSGA). A propeptide spanning residues 65 to 165 (ALRAAAGPLA…GLPCLAPGPF (101 aa)) is cleaved from the precursor. The disordered stretch occupies residues 106–165 (SQAGIPVRAPRSPRAPEPALEPESLDFSGAGQRLRRDVSRPAVDPAANRLGLPCLAPGPF). The segment covering 113-127 (RAPRSPRAPEPALEP) has biased composition (low complexity). A glycan (O-linked (Xyl...) (chondroitin sulfate) serine) is linked at Ser-133.

Belongs to the neuropeptide B/W family. Detected in cerebrospinal fluid and urine (at protein level). Detected at high levels in the substantia nigra, fetal kidney and trachea; at lower levels in testis, uterus, ovary and placenta. Not detectable in many regions of the central nervous system. Also detected at high levels in lymphoblastic leukemia and colorectal adenocarcinoma.

The protein localises to the secreted. Functionally, plays a regulatory role in the organization of neuroendocrine signals accessing the anterior pituitary gland. Stimulates water drinking and food intake. May play a role in the hypothalamic response to stress. NPW23 activates GPR7 and GPR8 more efficiently than NPW30. The protein is Neuropeptide W (NPW) of Homo sapiens (Human).